A 369-amino-acid polypeptide reads, in one-letter code: Aspartate-semialdehyde dehydrogenase (369 aa).

Residues 11–14, 38–39, and Gln-75 each bind NADP(+); these read RGMV and TS. Arg-104 is a phosphate binding site. The active-site Acyl-thioester intermediate is the Cys-137. Gln-164 contacts substrate. Residues 167-168 and Pro-195 each bind NADP(+); that span reads SG. A substrate-binding site is contributed by Glu-243. Lys-246 contributes to the phosphate binding site. Arg-269 contacts substrate. His-276 acts as the Proton acceptor in catalysis. NADP(+) is bound at residue Gln-352.

It belongs to the aspartate-semialdehyde dehydrogenase family. As to quaternary structure, homodimer.

The catalysed reaction is L-aspartate 4-semialdehyde + phosphate + NADP(+) = 4-phospho-L-aspartate + NADPH + H(+). The protein operates within amino-acid biosynthesis; L-lysine biosynthesis via DAP pathway; (S)-tetrahydrodipicolinate from L-aspartate: step 2/4. It participates in amino-acid biosynthesis; L-methionine biosynthesis via de novo pathway; L-homoserine from L-aspartate: step 2/3. Its pathway is amino-acid biosynthesis; L-threonine biosynthesis; L-threonine from L-aspartate: step 2/5. Functionally, catalyzes the NADPH-dependent formation of L-aspartate-semialdehyde (L-ASA) by the reductive dephosphorylation of L-aspartyl-4-phosphate. The protein is Aspartate-semialdehyde dehydrogenase of Buchnera aphidicola subsp. Baizongia pistaciae (strain Bp).